The sequence spans 210 residues: Frataxin, mitochondrial (210 aa).

The transit peptide at M1 to G41 directs the protein to the mitochondrion.

This sequence belongs to the frataxin family. As to quaternary structure, component of the mitochondrial core iron-sulfur cluster (ISC) complex composed of NFS1, LYRM4, NDUFAB1, ISCU, FXN, and FDX2; this complex is a heterohexamer containing two copies of each monomer. Homodimer. Monomer (probable predominant form). Oligomer. Monomers and polymeric aggregates of &gt;1 MDa have been isolated from mitochondria. A small fraction of heterologous overexpressed recombinant frataxin forms high-molecular weight aggregates that incorporate iron. Interacts with LYRM4. Interacts (via ferrous form) with ISCU; the interaction is possible when both are bound to the dimeric form of the cysteine desulfurase complex (NFS1:LYRM4) and the interaction enhances FXN interaction to the dimeric form of the cysteine desulfurase complex (NFS1:LYRM4). Interacts with FECH; one iron-bound FXN monomer seems to interact with a FECH homodimer. Interacts with SDHA and SDHB. Interacts with ACO2; the interaction is dependent on citrate. Interacts with HSPA9. In terms of assembly, interacts with ACO1. Interacts with ISCU (cytoplasmic form). Post-translationally, processed in two steps by mitochondrial processing peptidase (MPP). MPP first cleaves the precursor to intermediate form and subsequently converts the intermediate to yield frataxin mature form (frataxin(81-210)) which is the predominant form. The additional forms, frataxin(56-210) and frataxin(78-210), seem to be produced when the normal maturation process is impaired; their physiological relevance is unsure. As to expression, expressed in the heart, peripheral blood lymphocytes and dermal fibroblasts.

It localises to the mitochondrion. Its subcellular location is the cytoplasm. It is found in the cytosol. The enzyme catalyses 4 Fe(2+) + O2 + 4 H(+) = 4 Fe(3+) + 2 H2O. Its function is as follows. Functions as an activator of persulfide transfer to the scaffoding protein ISCU as component of the core iron-sulfur cluster (ISC) assembly complex and participates to the [2Fe-2S] cluster assembly. Accelerates sulfur transfer from NFS1 persulfide intermediate to ISCU and to small thiols such as L-cysteine and glutathione leading to persulfuration of these thiols and ultimately sulfide release. Binds ferrous ion and is released from FXN upon the addition of both L-cysteine and reduced FDX2 during [2Fe-2S] cluster assembly. The core iron-sulfur cluster (ISC) assembly complex is involved in the de novo synthesis of a [2Fe-2S] cluster, the first step of the mitochondrial iron-sulfur protein biogenesis. This process is initiated by the cysteine desulfurase complex (NFS1:LYRM4:NDUFAB1) that produces persulfide which is delivered on the scaffold protein ISCU in a FXN-dependent manner. Then this complex is stabilized by FDX2 which provides reducing equivalents to accomplish the [2Fe-2S] cluster assembly. Finally, the [2Fe-2S] cluster is transferred from ISCU to chaperone proteins, including HSCB, HSPA9 and GLRX5. May play a role in the protection against iron-catalyzed oxidative stress through its ability to catalyze the oxidation of Fe(2+) to Fe(3+); the oligomeric form but not the monomeric form has in vitro ferroxidase activity. May be able to store large amounts of iron in the form of a ferrihydrite mineral by oligomerization; however, the physiological relevance is unsure as reports are conflicting and the function has only been shown using heterologous overexpression systems. May function as an iron chaperone protein that protects the aconitase [4Fe-4S]2+ cluster from disassembly and promotes enzyme reactivation. May play a role as a high affinity iron binding partner for FECH that is capable of both delivering iron to ferrochelatase and mediating the terminal step in mitochondrial heme biosynthesis. In terms of biological role, modulates the RNA-binding activity of ACO1. May be involved in the cytoplasmic iron-sulfur protein biogenesis. May contribute to oxidative stress resistance and overall cell survival. This chain is Frataxin, mitochondrial, found in Homo sapiens (Human).